Consider the following 534-residue polypeptide: Probable cytochrome c oxidase subunit 1 (534 aa).

8 consecutive transmembrane segments (helical) span residues 35–55 (IMYI…SLLF), 76–96 (VLIT…ALFS), 97–117 (GFGN…FPRL), 120–140 (ISFW…FIDG), 165–185 (VAIF…INLI), 202–222 (PLFV…MPVL), 254–274 (LFWF…FGIV), and 286–306 (IFGY…GFIV). His81 is a Fe(II)-heme a binding site. Positions 260 and 264 each coordinate Cu cation. Residues 260–264 (HPEVY) constitute a cross-link (1'-histidyl-3'-tyrosine (His-Tyr)). Residues His309 and His310 each coordinate Cu cation. Helical transmembrane passes span 320 to 340 (ALIY…IKIF) and 357 to 377 (MLFA…GIIL). Residue His395 coordinates heme a3. Transmembrane regions (helical) follow at residues 396–416 (FHYT…YYWF), 433–453 (FWIT…LGLA), and 475–495 (IGAG…FYTL). A Fe(II)-heme a-binding site is contributed by His397.

It belongs to the heme-copper respiratory oxidase family.

It is found in the cell membrane. The catalysed reaction is 4 Fe(II)-[cytochrome c] + O2 + 8 H(+)(in) = 4 Fe(III)-[cytochrome c] + 2 H2O + 4 H(+)(out). It functions in the pathway energy metabolism; oxidative phosphorylation. Its function is as follows. Cytochrome c oxidase is the component of the respiratory chain that catalyzes the reduction of oxygen to water. Subunits 1-3 form the functional core of the enzyme complex. CO I is the catalytic subunit of the enzyme. Electrons originating in cytochrome c are transferred via the copper A center of subunit 2 and heme A of subunit 1 to the bimetallic center formed by heme A3 and copper B. This Rickettsia prowazekii (strain Madrid E) protein is Probable cytochrome c oxidase subunit 1 (ctaD).